Consider the following 380-residue polypeptide: Glucose-1-phosphate adenylyltransferase (380 aa).

Alpha-D-glucose 1-phosphate-binding positions include Tyr100, Gly165, 180-181 (EK), and Ser191.

The protein belongs to the bacterial/plant glucose-1-phosphate adenylyltransferase family. As to quaternary structure, homotetramer.

The catalysed reaction is alpha-D-glucose 1-phosphate + ATP + H(+) = ADP-alpha-D-glucose + diphosphate. It functions in the pathway glycan biosynthesis; glycogen biosynthesis. Involved in the biosynthesis of ADP-glucose, a building block required for the elongation reactions to produce glycogen. Catalyzes the reaction between ATP and alpha-D-glucose 1-phosphate (G1P) to produce pyrophosphate and ADP-Glc. This is Glucose-1-phosphate adenylyltransferase from Clostridium acetobutylicum (strain ATCC 824 / DSM 792 / JCM 1419 / IAM 19013 / LMG 5710 / NBRC 13948 / NRRL B-527 / VKM B-1787 / 2291 / W).